Reading from the N-terminus, the 246-residue chain is RNA polymerase sigma-B factor (246 aa).

The Polymerase core binding motif lies at 25 to 38 (DLIQEGNIGLMKAV). The H-T-H motif DNA-binding region spans 201–220 (LKELGEHFGFSRERARQLEI).

The protein belongs to the sigma-70 factor family.

In terms of biological role, sigma factors are initiation factors that promote the attachment of RNA polymerase to specific initiation sites and are then released. This sigma factor is essential for late-stage differentiation of M.xanthus. The chain is RNA polymerase sigma-B factor (sigB) from Myxococcus xanthus.